The primary structure comprises 416 residues: Glutamyl-tRNA reductase (416 aa).

Residues 49-52, serine 105, 110-112, and glutamine 116 contribute to the substrate site; these read TCNR and EPQ. Cysteine 50 functions as the Nucleophile in the catalytic mechanism. 185 to 190 is a binding site for NADP(+); it reads GAGETI.

It belongs to the glutamyl-tRNA reductase family. In terms of assembly, homodimer.

It catalyses the reaction (S)-4-amino-5-oxopentanoate + tRNA(Glu) + NADP(+) = L-glutamyl-tRNA(Glu) + NADPH + H(+). Its pathway is porphyrin-containing compound metabolism; protoporphyrin-IX biosynthesis; 5-aminolevulinate from L-glutamyl-tRNA(Glu): step 1/2. Catalyzes the NADPH-dependent reduction of glutamyl-tRNA(Glu) to glutamate 1-semialdehyde (GSA). The polypeptide is Glutamyl-tRNA reductase (Shewanella amazonensis (strain ATCC BAA-1098 / SB2B)).